The following is a 353-amino-acid chain: Outer membrane protein P5 (353 aa).

Residues 1 to 21 (MKKTAIALVVAGLAAASVAQA) form the signal peptide. Beta stranded transmembrane passes span 27-37 (TFYAGVKAGQA), 58-69 (SFTYGVFGGYQI), 77-85 (LAVELGYDD), 104-115 (HGAHLSLKGSYE), 120-128 (LDVYGKAGV), 158-167 (GLFAVGAEYA), 172-179 (LAVRLEYQ), and 205-213 (SINAGISYR). In terms of domain architecture, OmpA-like spans 227–353 (VVSKTFSLNS…RVEIAVNGTK (127 aa)). The cysteines at positions 326 and 338 are disulfide-linked.

Belongs to the outer membrane OOP (TC 1.B.6) superfamily. OmpA family. In terms of assembly, monomer and homodimer.

The protein resides in the cell outer membrane. With TolR probably plays a role in maintaining the position of the peptidoglycan cell wall in the periplasm. Acts as a porin with low permeability that allows slow penetration of small solutes; an internal gate slows down solute passage. The polypeptide is Outer membrane protein P5 (Haemophilus influenzae).